A 385-amino-acid chain; its full sequence is Flap endonuclease 1 (385 aa).

The segment at 1–104 (MGILGLSKLI…GELAKRAERR (104 aa)) is N-domain. Residue D34 coordinates Mg(2+). DNA-binding residues include R47 and R70. Residues D86, E158, E160, D179, and D181 each coordinate Mg(2+). Positions 122–253 (GIEKFNRRLV…KRAIELINTY (132 aa)) are I-domain. DNA is bound at residue E158. Residues G231 and D233 each contribute to the DNA site. D233 provides a ligand contact to Mg(2+). Positions 336 to 344 (TQVRLDSFF) are interaction with PCNA. The segment at 346–385 (TLPSTPNATNAAKRKAEEAKKSANNKKAKTSGGGRGRRPK) is disordered. Residues 368–385 (ANNKKAKTSGGGRGRRPK) show a composition bias toward basic residues.

Belongs to the XPG/RAD2 endonuclease family. FEN1 subfamily. As to quaternary structure, interacts with PCNA. Three molecules of FEN1 bind to one PCNA trimer with each molecule binding to one PCNA monomer. PCNA stimulates the nuclease activity without altering cleavage specificity. Mg(2+) serves as cofactor. In terms of processing, phosphorylated. Phosphorylation upon DNA damage induces relocalization to the nuclear plasma.

The protein resides in the nucleus. It is found in the nucleolus. The protein localises to the nucleoplasm. It localises to the mitochondrion. Its function is as follows. Structure-specific nuclease with 5'-flap endonuclease and 5'-3' exonuclease activities involved in DNA replication and repair. During DNA replication, cleaves the 5'-overhanging flap structure that is generated by displacement synthesis when DNA polymerase encounters the 5'-end of a downstream Okazaki fragment. It enters the flap from the 5'-end and then tracks to cleave the flap base, leaving a nick for ligation. Also involved in the long patch base excision repair (LP-BER) pathway, by cleaving within the apurinic/apyrimidinic (AP) site-terminated flap. Acts as a genome stabilization factor that prevents flaps from equilibrating into structures that lead to duplications and deletions. Also possesses 5'-3' exonuclease activity on nicked or gapped double-stranded DNA, and exhibits RNase H activity. Also involved in replication and repair of rDNA and in repairing mitochondrial DNA. This is Flap endonuclease 1 from Drosophila melanogaster (Fruit fly).